The primary structure comprises 1497 residues: DNA-directed RNA polymerase subunit beta' (1497 aa).

Zn(2+) contacts are provided by C67, C69, C82, and C85. Mg(2+) is bound by residues D499, D501, and D503. Zn(2+) is bound by residues C867, C943, C950, and C953. Residues 1476–1497 are disordered; that stretch reads ESNATERVVEEPATREGFANER. Positions 1482-1497 are enriched in basic and acidic residues; the sequence is RVVEEPATREGFANER.

The protein belongs to the RNA polymerase beta' chain family. In terms of assembly, the RNAP catalytic core consists of 2 alpha, 1 beta, 1 beta' and 1 omega subunit. When a sigma factor is associated with the core the holoenzyme is formed, which can initiate transcription. Mg(2+) is required as a cofactor. It depends on Zn(2+) as a cofactor.

The enzyme catalyses RNA(n) + a ribonucleoside 5'-triphosphate = RNA(n+1) + diphosphate. DNA-dependent RNA polymerase catalyzes the transcription of DNA into RNA using the four ribonucleoside triphosphates as substrates. This is DNA-directed RNA polymerase subunit beta' from Pelodictyon phaeoclathratiforme (strain DSM 5477 / BU-1).